The following is a 460-amino-acid chain: 5-hydroxytryptamine receptor 2C (460 aa).

Positions 1–32 (MVNLGNAVRSLLMHLIGLLVWQFDISISPVAA) are cleaved as a signal peptide. The Extracellular segment spans residues 33–56 (IVTDTFNSSDGGRLFQFPDGVQNW). Residues 57–81 (PALSIVVIIIMTIGGNILVIMAVSM) form a helical membrane-spanning segment. The Cytoplasmic portion of the chain corresponds to 82-87 (EKKLHN). A helical transmembrane segment spans residues 88-112 (ATNYFLMSLAIADMLVGLLVMPLSL). The Extracellular segment spans residues 113 to 129 (LAILYDYVWPLPRYLCP). Cys128 and Cys208 are joined by a disulfide. The chain crosses the membrane as a helical span at residues 130–152 (VWISLDVLFSTASIMHLCAISLD). Thr140 contributes to the ergotamine binding site. The DRY motif; important for ligand-induced conformation changes signature appears at 152–154 (DRY). The Cytoplasmic portion of the chain corresponds to 153–168 (RYVAIRNPIEHSRFNS). The chain crosses the membrane as a helical span at residues 169–190 (RTKAIMKIAIVWAISIGVSVPI). Residues 191–214 (PVIGLRDESKVFVNNTTCVLNDPN) lie on the Extracellular side of the membrane. N-linked (GlcNAc...) asparagine glycosylation is found at Asn204 and Asn205. Leu210 lines the ergotamine pocket. The chain crosses the membrane as a helical span at residues 215–237 (FVLIGSFVAFFIPLTIMVITYFL). The Cytoplasmic segment spans residues 238 to 313 (TIYVLRRQTL…AINNEKKASK (76 aa)). Positions 276 to 301 (EEENAPNPNPDQKPRRKKKEKRPRGT) are disordered. Positions 289–299 (PRRKKKEKRPR) are enriched in basic residues. A helical transmembrane segment spans residues 314–338 (VLGIVFFVFLIMWCPFFITNILSVL). Cys339 and Cys343 are oxidised to a cystine. Over 339–349 (CGKACNQKLME) the chain is Extracellular. Residues 350–372 (KLLNVFVWIGYVCSGINPLVYTL) form a helical membrane-spanning segment. Residues 366-370 (NPLVY) carry the NPxxY motif; important for ligand-induced conformation changes and signaling motif. The Cytoplasmic portion of the chain corresponds to 373–460 (FNKIYRRAFS…NVVSERISSV (88 aa)). Residues 458 to 460 (SSV) carry the PDZ-binding motif.

It belongs to the G-protein coupled receptor 1 family. As to quaternary structure, interacts with MPDZ. Interacts with ARRB2. Interacts with MPP3; this interaction stabilizes the receptor at the plasma membrane and prevents the desensitization of the HTR2C receptor-mediated calcium response.

The protein localises to the cell membrane. Functionally, G-protein coupled receptor for 5-hydroxytryptamine (serotonin). Also functions as a receptor for various drugs and psychoactive substances, including ergot alkaloid derivatives, 1-2,5,-dimethoxy-4-iodophenyl-2-aminopropane (DOI) and lysergic acid diethylamide (LSD). Ligand binding causes a conformation change that triggers signaling via guanine nucleotide-binding proteins (G proteins) and modulates the activity of downstream effectors. HTR2C is coupled to G(q)/G(11) G alpha proteins and activates phospholipase C-beta, releasing diacylglycerol (DAG) and inositol 1,4,5-trisphosphate (IP3) second messengers that modulate the activity of phosphatidylinositol 3-kinase and promote the release of Ca(2+) ions from intracellular stores, respectively. Beta-arrestin family members inhibit signaling via G proteins and mediate activation of alternative signaling pathways. Regulates neuronal activity via the activation of short transient receptor potential calcium channels in the brain, and thereby modulates the activation of pro-opiomelanocortin neurons and the release of CRH that then regulates the release of corticosterone. Plays a role in the regulation of appetite and eating behavior, responses to anxiogenic stimuli and stress. Plays a role in insulin sensitivity and glucose homeostasis. The polypeptide is 5-hydroxytryptamine receptor 2C (Rattus norvegicus (Rat)).